The chain runs to 489 residues: N-succinylglutamate 5-semialdehyde dehydrogenase (489 aa).

An NAD(+)-binding site is contributed by 223–228 (GSASTG). Active-site residues include E246 and C280.

Belongs to the aldehyde dehydrogenase family. AstD subfamily.

The catalysed reaction is N-succinyl-L-glutamate 5-semialdehyde + NAD(+) + H2O = N-succinyl-L-glutamate + NADH + 2 H(+). Its pathway is amino-acid degradation; L-arginine degradation via AST pathway; L-glutamate and succinate from L-arginine: step 4/5. In terms of biological role, catalyzes the NAD-dependent reduction of succinylglutamate semialdehyde into succinylglutamate. In Acinetobacter baylyi (strain ATCC 33305 / BD413 / ADP1), this protein is N-succinylglutamate 5-semialdehyde dehydrogenase.